We begin with the raw amino-acid sequence, 222 residues long: MLTVSLLTLSLAAYASAVATVTDANNFMDAVLHTRIPALITSEPILFPFATIPPFNFTVAGTNILTNRELQVNVSRGEIRGFSTEVKRVGDCMPPVLREGKTSIRCTLNFTGINATFDTHTRGDNIVASDKNIWVRASVIDTTGQFEAVAERGKQGNVHTFLVDKIHVKVKNDKALSLNDKRKKKFRQHFEDKVLTVLPQIFYGAYLHLLGAAVSSVPFPHV.

The N-terminal stretch at Met1 to Ala17 is a signal peptide. 4 N-linked (GlcNAc...) asparagine glycosylation sites follow: Asn56, Asn73, Asn109, and Asn114.

Salivary gland (at protein level). Adult midgut.

The protein localises to the secreted. In terms of biological role, inhibits host coagulation by delaying thrombin generation and reducing endogenous thrombin potential (ETP). The chain is Salivary anticoagulant protein P23 from Ixodes scapularis (Black-legged tick).